The chain runs to 466 residues: Uridine kinase-like protein 3 (466 aa).

Residues 41-246 (HGQPFVIGVA…IVQHIHTKLG (206 aa)) form a uridine kinase region. Residues 256–466 (NLYVIQSTFQ…GDRYFGTDDE (211 aa)) are uracil phosphoribosyltransferase. GTP is bound by residues Lys280, Arg289, and 323 to 326 (CKKL). The 5-phospho-alpha-D-ribose 1-diphosphate site is built by Arg333 and Arg358. Arg378 serves as a coordination point for GTP. 5-phospho-alpha-D-ribose 1-diphosphate contacts are provided by residues Asp384, 389–392 (TGNS), and Glu455. A uracil-binding site is contributed by 454-456 (GEF).

The protein in the N-terminal section; belongs to the uridine kinase family. In the C-terminal section; belongs to the UPRTase family. The cofactor is Mg(2+).

The catalysed reaction is UMP + diphosphate = 5-phospho-alpha-D-ribose 1-diphosphate + uracil. It catalyses the reaction cytidine + ATP = CMP + ADP + H(+). The enzyme catalyses uridine + ATP = UMP + ADP + H(+). Its pathway is pyrimidine metabolism; UMP biosynthesis via salvage pathway; UMP from uracil: step 1/1. The protein operates within pyrimidine metabolism; CTP biosynthesis via salvage pathway; CTP from cytidine: step 1/3. It functions in the pathway pyrimidine metabolism; UMP biosynthesis via salvage pathway; UMP from uridine: step 1/1. Its activity is regulated as follows. Allosterically activated by GTP. Involved in the pyrimidine salvage pathway. The uracil phosphoribosyltransferase (UPRT) activity, that catalyzes the conversion of uracil and 5-phospho-alpha-D-ribose 1-diphosphate (PRPP) to UMP and diphosphate, is unsure. This Arabidopsis thaliana (Mouse-ear cress) protein is Uridine kinase-like protein 3 (UKL3).